The primary structure comprises 354 residues: 3-dehydroquinate synthase (354 aa).

NAD(+) contacts are provided by residues 100–104 (GATGD), 124–125 (TT), Lys136, Lys145, and 163–166 (FLKT). Zn(2+)-binding residues include Glu178, His242, and His256.

It belongs to the sugar phosphate cyclases superfamily. Dehydroquinate synthase family. It depends on NAD(+) as a cofactor. The cofactor is Co(2+). Zn(2+) is required as a cofactor.

It localises to the cytoplasm. The catalysed reaction is 7-phospho-2-dehydro-3-deoxy-D-arabino-heptonate = 3-dehydroquinate + phosphate. It participates in metabolic intermediate biosynthesis; chorismate biosynthesis; chorismate from D-erythrose 4-phosphate and phosphoenolpyruvate: step 2/7. Functionally, catalyzes the conversion of 3-deoxy-D-arabino-heptulosonate 7-phosphate (DAHP) to dehydroquinate (DHQ). The polypeptide is 3-dehydroquinate synthase (Staphylococcus aureus (strain Mu50 / ATCC 700699)).